Consider the following 302-residue polypeptide: TALHKMEDFTFDGTKRLSVNYVKGILQPTVTCDIWDEIWNFQAKPDDLLISTYPKAGTTWTQEIVELIQNEGDVEKSKRAPTHQRFPFLEWKIPSLGSGLEQAQAMPSPRILKTHLPFHLLPPSFLEKNCKIIYVARNPKDNMVSYYHFQRMNKALPDPGTWEEYFETFLAGKVCWGSWHEHVKGWWEAKDKHRILYLFYEDMKKNPKHEVQKLTEFIEKKLDDKVLDKIVHYTSFDVMKQNSMANYSSIPAEIMDHSISPFMRKGAVGDWKKHFTVAQNERFDEDYKKKMADTRLTFHFQF.

55 to 60 (KAGTTW) lines the 3'-phosphoadenylyl sulfate pocket. Residue 113–115 (KTH) participates in substrate binding. The active-site Proton acceptor is H115. Residues R137, S145, Y200, 234-239 (TSFDVM), and 262-266 (FMRKG) each bind 3'-phosphoadenylyl sulfate.

It belongs to the sulfotransferase 1 family. As to expression, expressed in liver, kidney and jejunum.

Its subcellular location is the cytoplasm. The protein localises to the cytosol. It catalyses the reaction a phenol + 3'-phosphoadenylyl sulfate = an aryl sulfate + adenosine 3',5'-bisphosphate + H(+). The catalysed reaction is 17beta-estradiol + 3'-phosphoadenylyl sulfate = 17beta-estradiol 3-sulfate + adenosine 3',5'-bisphosphate + H(+). The enzyme catalyses bisphenol A + 3'-phosphoadenylyl sulfate = bisphenyl A sulfate + adenosine 3',5'-bisphosphate + H(+). In terms of biological role, sulfotransferase that utilizes 3'-phospho-5'-adenylyl sulfate (PAPS) as sulfonate donor to catalyze the sulfate conjugation of phenolic compounds and estrogen (E2). Can also sulfonate estrogenic compounds, however, the dietary flavonoids (phytoestrogen) and environmental estrogens, like bisphenol A are better substrates than 17beta-estradiol (E2). This Macaca fascicularis (Crab-eating macaque) protein is Sulfotransferase 1C4 (SULT1C4).